The following is a 676-amino-acid chain: Beta-galactosidase BgaP (676 aa).

R112 provides a ligand contact to substrate. Residue C116 coordinates Zn(2+). Residue N150 coordinates substrate. The Proton donor role is filled by E151. Positions 156, 158, and 161 each coordinate Zn(2+). Catalysis depends on E308, which acts as the Nucleophile. Substrate contacts are provided by residues W316 and 356 to 359 (EKYH).

Belongs to the glycosyl hydrolase 42 family. In terms of assembly, homodimer.

It catalyses the reaction Hydrolysis of terminal non-reducing beta-D-galactose residues in beta-D-galactosides.. No activity lost during treatment with 100 mM EDTA after 2 hours, and the addition of 1 mM MgCl(2), 1 mM CaCl(2) or 1 mM MnCl(2) has no effect. However, the enzyme activity is inhibited by Zn(2+), Cu(2+), Ni(2+) and Co(2+) to different extents. Addition of Na(+) or K(+) slightly stimulates the enzyme activity at low concentrations and the optimal concentration is 250 mM. A further increase of their concentration of ions above the optimum value results in a decrease in enzyme activity. The enzyme is still active even in the presence of Na(+) or K(+) at a concentration up to 5 M. Its function is as follows. Hydrolyzes lactose, o-nitrophenyl-beta-D-galactopyranoside (ONPG), p-nitrophenyl-beta-D-galactopyranoside (PNPG), 5-bromo-4-chloro-3-indolyl-beta-D-galactopyranoside (X-gal), o-nitrophenyl-beta-D-fucopyranoside, p-nitrophenyl-beta-D-mannoside, o-nitrophenyl-beta-D-glucoside, p-nitrophenyl-beta-D-xyloside, p-nitrophenyl-beta-D-cellobioside, p-nitrophenyl-beta-D-arabinoside, p-nitrophenyl-beta-D-lactoside, p-nitrophenyl-beta-D-galacturonide, p-nitrophenyl-beta-D-glucuronide and p-nitrophenyl-alpha-D-galactoside with highest level of activity with ONPG as substrate, intermediate level of activity with PNPG and lower levels of activity with all other chromogenic nitrophenyl analogs. Able to hydrolyze 34% of milk lactose after 60 minutes at 5 degrees Celsius. In Planococcus sp. (strain L4), this protein is Beta-galactosidase BgaP.